Consider the following 374-residue polypeptide: DNA replication and repair protein RecF (374 aa).

Residue 30 to 37 (GENAQGKT) coordinates ATP.

It belongs to the RecF family.

The protein resides in the cytoplasm. Its function is as follows. The RecF protein is involved in DNA metabolism; it is required for DNA replication and normal SOS inducibility. RecF binds preferentially to single-stranded, linear DNA. It also seems to bind ATP. In Lactiplantibacillus plantarum (strain ATCC BAA-793 / NCIMB 8826 / WCFS1) (Lactobacillus plantarum), this protein is DNA replication and repair protein RecF.